The following is a 695-amino-acid chain: Lysophospholipase 2 (695 aa).

The N-terminal stretch at Met1–Ala19 is a signal peptide. N-linked (GlcNAc...) asparagine glycans are attached at residues Asn26, Asn72, Asn83, Asn115, Asn152, Asn171, Asn207, Asn269, Asn335, Asn379, Asn480, Asn504, Asn513, Asn532, Asn556, Asn573, Asn620, Asn626, Asn644, and Asn648. The region spanning Ser28–Asp577 is the PLA2c domain. The segment at Asn612 to Ser662 is disordered.

The protein belongs to the lysophospholipase family.

It is found in the secreted. Its subcellular location is the cell wall. The enzyme catalyses a 1-acyl-sn-glycero-3-phosphocholine + H2O = sn-glycerol 3-phosphocholine + a fatty acid + H(+). Its function is as follows. Catalyzes the release of fatty acids from lysophospholipids. Phospholipase B may well contribute to pathogenicity by abetting the fungus in damaging and traversing host cell membranes, processes which likely increase the rapidity of disseminated infection. In Candida glabrata (strain ATCC 2001 / BCRC 20586 / JCM 3761 / NBRC 0622 / NRRL Y-65 / CBS 138) (Yeast), this protein is Lysophospholipase 2.